The sequence spans 5251 residues: Dynein heavy chain-like protein 2 (5251 aa).

Kelch repeat units follow at residues 37-87 (GLFL…CYHN), 95-143 (YVII…LQNG), 266-317 (SLIL…IHGN), 318-367 (NLFI…LVES), and 372-421 (IIFI…QNNE). The interval 140–188 (LQNGINGTNEKGYISQTDDENCSDNKYGENQDYGSNDSDSKDGEDIDKD) is disordered. Residues 686-732 (NNIEQRNNNNDNNDNNNNDNNNNNNNDNNNNNNNNNNNNNNNNDNLN) form a disordered region. Positions 692-730 (NNNNDNNDNNNNDNNNNNNNDNNNNNNNNNNNNNNNNDN) are enriched in low complexity. 2 coiled-coil regions span residues 1155 to 1225 (DNII…KKIK) and 1544 to 1610 (KLNN…KLIS). Residues 1554–1598 (EKNKNANENSNEIETNKYNKKEELTNNRDGDGDDDDNIKNDKDEK) are disordered. The segment covering 1567-1583 (ETNKYNKKEELTNNRDG) has biased composition (basic and acidic residues). One copy of the Kelch 6 repeat lies at 1639–1685 (HIKYTLKYYITNLFRLKDLFNNEKEKWIDENYLAQVFILCNTIFFVN). Positions 1802-1825 (HQEGKQEYNNKNNDNDNNNNNNNN) are disordered. Residues 1810 to 1825 (NNKNNDNDNNNNNNNN) are compositionally biased toward low complexity. 1895-1902 (GPAGTGKT) lines the ATP pocket. Positions 2136–2188 (NDINENKKEKDNIEELKSDNVKEEKKTKKKHLEDNNNNKKKELFNLNNIEKEL) form a coiled coil. The interval 2152 to 2171 (KSDNVKEEKKTKKKHLEDNN) is disordered. 2224-2231 (GEAGCGKT) contributes to the ATP binding site. The stretch at 2447–2494 (VIWCFGGFLGEKDNVNYKKSFDKYWKNTFKSIKVNRKISVFDFYVENN) is one Kelch 7 repeat. Residues 2546 to 2553 (GKTGVGKT) and 2890 to 2897 (GIGGCGKT) contribute to the ATP site. Composition is skewed to low complexity over residues 3138–3154 (DNNN…DGNN) and 3652–3671 (DQNF…NSTN). Disordered stretches follow at residues 3138–3163 (DNNN…EGND), 3652–3686 (DQNF…NHNN), 4042–4250 (EDND…EENV), 4280–4299 (NGKI…DFEN), 4773–4824 (MDFH…ENEE), and 4910–4948 (KIIK…HSGS). The segment covering 4059–4086 (KMEDEEKMEEEKVDEEKMEEEKVDEEKM) has biased composition (acidic residues). Basic and acidic residues predominate over residues 4087 to 4247 (EDEKVEEKME…EKGEEQKAEE (161 aa)). 2 stretches are compositionally biased toward acidic residues: residues 4289-4299 (DDLEEEEDFEN) and 4807-4823 (DDDD…EENE). Over residues 4912–4937 (IKKEKPGDNKDNKYTHDQKKETIHKE) the composition is skewed to basic and acidic residues.

Belongs to the dynein heavy chain family. As to quaternary structure, consists of at least two heavy chains and a number of intermediate and light chains.

The protein localises to the cytoplasm. Its subcellular location is the cytoskeleton. Acts as a motor for the intracellular retrograde motility of vesicles and organelles along microtubules. Dynein has ATPase activity; the force-producing power stroke is thought to occur on release of ADP. The protein is Dynein heavy chain-like protein 2 of Plasmodium falciparum (isolate 3D7).